The sequence spans 441 residues: UDP-N-acetylglucosamine--peptide N-acetylglucosaminyltransferase stabilizing protein GtfB (441 aa).

This sequence belongs to the GtfB family. Forms a heterotetramer with 2 subunits each of GtfA and GtfB. Part of the accessory SecA2/SecY2 protein translocation apparatus.

It is found in the cell membrane. The protein operates within protein modification; protein glycosylation. Functionally, required for polymorphic O-glycosylation of the serine-rich repeat protein (SRRP) in this bacteria. A stabilizing protein that is part of the accessory SecA2/SecY2 system specifically required to export serine-rich repeat cell wall proteins encoded in the same operon. The GtfA-GtfB complex adds GlcNAc from UDP-GlcNAc to the substrate protein, attaching the first sugar residue. Stabilizes the glycosylation activity of GtfA. Has no N-acetylglucosaminyl transferase activity on its own. This chain is UDP-N-acetylglucosamine--peptide N-acetylglucosaminyltransferase stabilizing protein GtfB, found in Limosilactobacillus reuteri subsp. suis (strain ATCC 53608 / LMG 31752 / 1063) (Lactobacillus reuteri).